We begin with the raw amino-acid sequence, 119 residues long: Large ribosomal subunit protein bL20 (119 aa).

This sequence belongs to the bacterial ribosomal protein bL20 family.

Functionally, binds directly to 23S ribosomal RNA and is necessary for the in vitro assembly process of the 50S ribosomal subunit. It is not involved in the protein synthesizing functions of that subunit. The chain is Large ribosomal subunit protein bL20 from Bordetella avium (strain 197N).